The sequence spans 408 residues: Acetylornithine/succinyldiaminopimelate aminotransferase (408 aa).

Pyridoxal 5'-phosphate-binding positions include 108–109 (GA) and F141. R144 is a binding site for N(2)-acetyl-L-ornithine. Pyridoxal 5'-phosphate is bound at residue 226 to 229 (DEIQ). Position 255 is an N6-(pyridoxal phosphate)lysine (K255). T283 is a N(2)-acetyl-L-ornithine binding site. T284 is a pyridoxal 5'-phosphate binding site.

This sequence belongs to the class-III pyridoxal-phosphate-dependent aminotransferase family. ArgD subfamily. As to quaternary structure, homodimer. The cofactor is pyridoxal 5'-phosphate.

It localises to the cytoplasm. It catalyses the reaction N(2)-acetyl-L-ornithine + 2-oxoglutarate = N-acetyl-L-glutamate 5-semialdehyde + L-glutamate. It carries out the reaction N-succinyl-(2S,6S)-2,6-diaminopimelate + 2-oxoglutarate = (S)-2-succinylamino-6-oxoheptanedioate + L-glutamate. It functions in the pathway amino-acid biosynthesis; L-arginine biosynthesis; N(2)-acetyl-L-ornithine from L-glutamate: step 4/4. It participates in amino-acid biosynthesis; L-lysine biosynthesis via DAP pathway; LL-2,6-diaminopimelate from (S)-tetrahydrodipicolinate (succinylase route): step 2/3. Functionally, involved in both the arginine and lysine biosynthetic pathways. The sequence is that of Acetylornithine/succinyldiaminopimelate aminotransferase from Buchnera aphidicola subsp. Acyrthosiphon pisum (strain APS) (Acyrthosiphon pisum symbiotic bacterium).